The primary structure comprises 332 residues: MTKITVFGMGSFGTALANVLAENGHDVLMWGKNQDAVDELNTCHTNKKYLKYAKLDVNIIATSDMTKAIQFADIYLMALPTKAMREVASQINDKLTSKKTFIHVAKGIENGTFKRVSEMIEDSISPEYNAGIGVLSGPSHAEEVVVKQPTTVAASSKDKSVSKLTQDLFMNDYLRVYTNDDLIGVELGGALKNIIAVASGIVAGIGYGDNAKAALMTRGLAEISRLGEKLGADPMTFLGLGGIGDLIVTCTSTHSRNFTLGYKLGQGESMDQALSEMNMVVEGIYTTKSVYHLAKEKNVDMPITNALYRVLFENISVKECVKDLMERDKKSE.

Positions 11, 12, 32, and 106 each coordinate NADPH. 3 residues coordinate sn-glycerol 3-phosphate: Lys-106, Gly-137, and Ser-139. Ala-141 serves as a coordination point for NADPH. Residues Lys-192, Asp-245, Ser-255, Arg-256, and Asn-257 each coordinate sn-glycerol 3-phosphate. The active-site Proton acceptor is the Lys-192. Position 256 (Arg-256) interacts with NADPH. 2 residues coordinate NADPH: Val-280 and Glu-282.

This sequence belongs to the NAD-dependent glycerol-3-phosphate dehydrogenase family.

It localises to the cytoplasm. The enzyme catalyses sn-glycerol 3-phosphate + NAD(+) = dihydroxyacetone phosphate + NADH + H(+). It carries out the reaction sn-glycerol 3-phosphate + NADP(+) = dihydroxyacetone phosphate + NADPH + H(+). Its pathway is membrane lipid metabolism; glycerophospholipid metabolism. In terms of biological role, catalyzes the reduction of the glycolytic intermediate dihydroxyacetone phosphate (DHAP) to sn-glycerol 3-phosphate (G3P), the key precursor for phospholipid synthesis. The polypeptide is Glycerol-3-phosphate dehydrogenase [NAD(P)+] (Staphylococcus aureus (strain USA300)).